A 504-amino-acid polypeptide reads, in one-letter code: UDP-N-acetylmuramoylalanine--D-glutamate ligase (504 aa).

Residue 129–135 (GTNGKTT) coordinates ATP.

Belongs to the MurCDEF family.

The protein resides in the cytoplasm. It catalyses the reaction UDP-N-acetyl-alpha-D-muramoyl-L-alanine + D-glutamate + ATP = UDP-N-acetyl-alpha-D-muramoyl-L-alanyl-D-glutamate + ADP + phosphate + H(+). It functions in the pathway cell wall biogenesis; peptidoglycan biosynthesis. In terms of biological role, cell wall formation. Catalyzes the addition of glutamate to the nucleotide precursor UDP-N-acetylmuramoyl-L-alanine (UMA). The protein is UDP-N-acetylmuramoylalanine--D-glutamate ligase of Cupriavidus metallidurans (strain ATCC 43123 / DSM 2839 / NBRC 102507 / CH34) (Ralstonia metallidurans).